We begin with the raw amino-acid sequence, 459 residues long: Putrescine aminotransferase (459 aa).

Residues 150–151 and Q274 contribute to the pyridoxal 5'-phosphate site; that span reads GT. At K300 the chain carries N6-(pyridoxal phosphate)lysine. T332 contributes to the pyridoxal 5'-phosphate binding site.

The protein belongs to the class-III pyridoxal-phosphate-dependent aminotransferase family. Putrescine aminotransferase subfamily. Pyridoxal 5'-phosphate is required as a cofactor.

The catalysed reaction is an alkane-alpha,omega-diamine + 2-oxoglutarate = an omega-aminoaldehyde + L-glutamate. It catalyses the reaction putrescine + 2-oxoglutarate = 1-pyrroline + L-glutamate + H2O. The enzyme catalyses cadaverine + 2-oxoglutarate = 5-aminopentanal + L-glutamate. The protein operates within amine and polyamine degradation; putrescine degradation; 4-aminobutanal from putrescine (transaminase route): step 1/1. Catalyzes the aminotransferase reaction from putrescine to 2-oxoglutarate, leading to glutamate and 4-aminobutanal, which spontaneously cyclizes to form 1-pyrroline. This is the first step in one of two pathways for putrescine degradation, where putrescine is converted into 4-aminobutanoate (gamma-aminobutyrate or GABA) via 4-aminobutanal. Also functions as a cadaverine transaminase in a a L-lysine degradation pathway to succinate that proceeds via cadaverine, glutarate and L-2-hydroxyglutarate. The protein is Putrescine aminotransferase of Salmonella choleraesuis (strain SC-B67).